The chain runs to 240 residues: Lipoprotein-releasing system ATP-binding protein LolD (240 aa).

Residues 15 to 240 (IRAESLGKTY…GLRELTSAEV (226 aa)) form the ABC transporter domain. 51–58 (GASGAGKS) contributes to the ATP binding site.

This sequence belongs to the ABC transporter superfamily. Lipoprotein translocase (TC 3.A.1.125) family. As to quaternary structure, the complex is composed of two ATP-binding proteins (LolD) and two transmembrane proteins (LolC and LolE).

The protein localises to the cell inner membrane. In terms of biological role, part of the ABC transporter complex LolCDE involved in the translocation of mature outer membrane-directed lipoproteins, from the inner membrane to the periplasmic chaperone, LolA. Responsible for the formation of the LolA-lipoprotein complex in an ATP-dependent manner. This is Lipoprotein-releasing system ATP-binding protein LolD from Xylella fastidiosa (strain Temecula1 / ATCC 700964).